The following is a 358-amino-acid chain: Photosystem II protein D1 1 (358 aa).

3 consecutive transmembrane segments (helical) span residues 28-45, 117-132, and 141-155; these read YVGW…AATI, HFLI…QWEL, and WICV…AAFA. Histidine 117 contributes to the chlorophyll a binding site. Tyrosine 125 serves as a coordination point for pheophytin a. Residues aspartate 169 and glutamate 188 each contribute to the [CaMn4O5] cluster site. A helical transmembrane segment spans residues 196-217; that stretch reads FHMLGVAGVFGGSLFSAMHGSL. Histidine 197 lines the chlorophyll a pocket. Residues histidine 214 and 263–264 each bind a quinone; that span reads SF. Residue histidine 214 participates in Fe cation binding. Histidine 271 lines the Fe cation pocket. A helical transmembrane segment spans residues 273–287; that stretch reads FLGAWPVIGIWFTSM. Histidine 331, glutamate 332, aspartate 341, and alanine 343 together coordinate [CaMn4O5] cluster. A propeptide spanning residues 344–358 is cleaved from the precursor; that stretch reads AAESTPVALQAPAIG.

It belongs to the reaction center PufL/M/PsbA/D family. PSII is composed of 1 copy each of membrane proteins PsbA, PsbB, PsbC, PsbD, PsbE, PsbF, PsbH, PsbI, PsbJ, PsbK, PsbL, PsbM, PsbT, PsbX, PsbY, PsbZ, Psb30/Ycf12, peripheral proteins PsbO, CyanoQ (PsbQ), PsbU, PsbV and a large number of cofactors. It forms dimeric complexes. Requires The D1/D2 heterodimer binds P680, chlorophylls that are the primary electron donor of PSII, and subsequent electron acceptors. It shares a non-heme iron and each subunit binds pheophytin, quinone, additional chlorophylls, carotenoids and lipids. D1 provides most of the ligands for the Mn4-Ca-O5 cluster of the oxygen-evolving complex (OEC). There is also a Cl(-1) ion associated with D1 and D2, which is required for oxygen evolution. The PSII complex binds additional chlorophylls, carotenoids and specific lipids. as cofactor. In terms of processing, tyr-160 forms a radical intermediate that is referred to as redox-active TyrZ, YZ or Y-Z. Post-translationally, C-terminally processed by CtpA; processing is essential to allow assembly of the oxygen-evolving complex and thus photosynthetic growth.

It is found in the cellular thylakoid membrane. It catalyses the reaction 2 a plastoquinone + 4 hnu + 2 H2O = 2 a plastoquinol + O2. In terms of biological role, photosystem II (PSII) is a light-driven water:plastoquinone oxidoreductase that uses light energy to abstract electrons from H(2)O, generating O(2) and a proton gradient subsequently used for ATP formation. It consists of a core antenna complex that captures photons, and an electron transfer chain that converts photonic excitation into a charge separation. The D1/D2 (PsbA/PsbD) reaction center heterodimer binds P680, the primary electron donor of PSII as well as several subsequent electron acceptors. The protein is Photosystem II protein D1 1 of Synechococcus sp. (strain CC9902).